Consider the following 469-residue polypeptide: Phosphoenolpyruvate carboxylase (469 aa).

Belongs to the PEPCase type 2 family. As to quaternary structure, homotetramer. The cofactor is Mg(2+).

The enzyme catalyses oxaloacetate + phosphate = phosphoenolpyruvate + hydrogencarbonate. Functionally, catalyzes the irreversible beta-carboxylation of phosphoenolpyruvate (PEP) to form oxaloacetate (OAA), a four-carbon dicarboxylic acid source for the tricarboxylic acid cycle. This chain is Phosphoenolpyruvate carboxylase, found in Pyrococcus abyssi (strain GE5 / Orsay).